Consider the following 2241-residue polypeptide: Little elongation complex subunit 1 (2241 aa).

Residues 22–185 (CASLQQNLNE…KQKNEKELRH (164 aa)) adopt a coiled-coil conformation. Basic and acidic residues-rich tracts occupy residues 222-233 (GEGGRRIPEKPA) and 296-315 (AFCE…DGNR). Disordered regions lie at residues 222-255 (GEGG…GGPA), 273-315 (GDFS…DGNR), and 368-387 (GEFT…SMES). Serine 523 carries the post-translational modification Phosphoserine. The disordered stretch occupies residues 552–590 (EFSKRTLTDGSASKSPCVTGSGRFQRRERDVRESTPQSG). Polar residues predominate over residues 559–569 (TDGSASKSPCV). Serine 676 carries the post-translational modification Phosphoserine. Residues 703-817 (TAKGHSLPQS…PSGESTIPPE (115 aa)) are disordered. Gly residues predominate over residues 718–728 (TGGGQCKGRGP). The segment covering 738–760 (DWTSLARSQAGFTRRSSGSADST) has biased composition (polar residues). Threonine 803 is subject to Phosphothreonine. At serine 896 the chain carries Phosphoserine. The interval 971–1119 (SGVTSGVFPA…VGEAGHPSDV (149 aa)) is disordered. Over residues 1065 to 1074 (EEDTEVEDEA) the composition is skewed to acidic residues. Residues 1091–1104 (RQQEQAEDSHRPLG) show a composition bias toward basic and acidic residues. At lysine 1189 the chain carries N6-acetyllysine. Disordered stretches follow at residues 1231–1328 (SDVL…CLSI), 1419–1475 (ASSQ…KSRL), and 1543–1671 (VHLN…AAAS). Positions 1252-1266 (DTEHALLESTHHSQA) are enriched in basic and acidic residues. The span at 1460 to 1470 (DISSNGQSANF) shows a compositional bias: polar residues. Phosphoserine occurs at positions 1553 and 1582. Positions 1574-1585 (DRSTPTNCSPDT) are enriched in polar residues. Pro residues predominate over residues 1595–1606 (PPLPPLLPPLIA). At threonine 1607 the chain carries Phosphothreonine. Phosphoserine occurs at positions 1657, 1662, 1664, 1666, and 1677. Disordered stretches follow at residues 1777–1800 (GSSG…AGGK) and 1812–1843 (KRLR…GSPL). The span at 1781 to 1794 (ADGSQGKSQDSGVQ) shows a compositional bias: polar residues. Residues 1814–1829 (LRLDNKSPEPDTREVT) are compositionally biased toward basic and acidic residues. Residue serine 1820 is modified to Phosphoserine.

Belongs to the ICE1 family. Component of the little elongation complex (LEC), at least composed of ELL (ELL, ELL2 or ELL3), ZC3H8, ICE1 and ICE2. Interacts (via N-terminus domain) with ELL. Interacts (via C-terminus domain) with ICE2 and ZC3H8.

It localises to the nucleus. Its subcellular location is the cajal body. In terms of biological role, component of the little elongation complex (LEC), a complex required to regulate small nuclear RNA (snRNA) gene transcription by RNA polymerase II and III. Specifically acts as a scaffold protein that promotes the LEC complex formation and recruitment and RNA polymerase II occupancy at snRNA genes in subnuclear bodies. The protein is Little elongation complex subunit 1 (Ice1) of Mus musculus (Mouse).